The chain runs to 178 residues: Ribosome maturation factor RimM (178 aa).

The PRC barrel domain maps to 101–178 (ADEYYWYQLV…VMRVEWDADF (78 aa)).

Belongs to the RimM family. As to quaternary structure, binds ribosomal protein uS19.

Its subcellular location is the cytoplasm. In terms of biological role, an accessory protein needed during the final step in the assembly of 30S ribosomal subunit, possibly for assembly of the head region. Essential for efficient processing of 16S rRNA. May be needed both before and after RbfA during the maturation of 16S rRNA. It has affinity for free ribosomal 30S subunits but not for 70S ribosomes. The sequence is that of Ribosome maturation factor RimM from Pseudomonas putida (strain GB-1).